A 320-amino-acid polypeptide reads, in one-letter code: Malate dehydrogenase (320 aa).

NAD(+)-binding positions include 10–15 (GSGMIG) and aspartate 34. Substrate is bound by residues arginine 83 and arginine 89. NAD(+)-binding positions include asparagine 96 and 119-121 (ITN). Substrate is bound by residues asparagine 121 and arginine 152. Histidine 176 (proton acceptor) is an active-site residue.

This sequence belongs to the LDH/MDH superfamily. MDH type 3 family.

The catalysed reaction is (S)-malate + NAD(+) = oxaloacetate + NADH + H(+). Its function is as follows. Catalyzes the reversible oxidation of malate to oxaloacetate. The sequence is that of Malate dehydrogenase from Bartonella henselae (strain ATCC 49882 / DSM 28221 / CCUG 30454 / Houston 1) (Rochalimaea henselae).